The chain runs to 495 residues: Transcription termination/antitermination protein NusA (495 aa).

Residues 135–200 enclose the S1 motif domain; that stretch reads GEIITGVVKK…RGAQLFVTRS (66 aa). The KH domain occupies 302–368; that stretch reads KHTMDIAVEA…FTKYLDIDED (67 aa). 2 repeat units span residues 364–414 and 439–489. Positions 364-489 are 2 X 51 AA approximate repeats; the sequence is DIDEDFATVL…ALIMAARNIC (126 aa).

The protein belongs to the NusA family. As to quaternary structure, monomer. Binds directly to the core enzyme of the DNA-dependent RNA polymerase and to nascent RNA.

The protein localises to the cytoplasm. Its function is as follows. Participates in both transcription termination and antitermination. This Shigella flexneri protein is Transcription termination/antitermination protein NusA.